We begin with the raw amino-acid sequence, 221 residues long: Immunoregulatory peptides (221 aa).

Residues methionine 1–glycine 19 form the signal peptide. Positions glutamate 20 to arginine 45 are excised as a propeptide. Residues lysine 21–arginine 155 form a disordered region. The segment covering aspartate 25–serine 34 has biased composition (polar residues). Over residues proline 48–threonine 69 the composition is skewed to low complexity. Polar residues-rich tracts occupy residues valine 70–lysine 85 and asparagine 123–glutamate 133. The propeptide occupies glutamate 191–serine 221.

In terms of tissue distribution, salivary glands.

The protein localises to the secreted. In terms of biological role, suppress host inflammatory response. Exerts significant anti-inflammatory functions, either by directly inhibiting host secretion of inflammatory factors such as tumor necrosis factor-alpha (TNF), monocyte chemotactic protein-1 (CCL2), and interferon-gamma (IFNG) or by indirectly increasing the secretion of immunosuppressant cytokine of interleukin-10 (IL10). Also potently scavenges free radical in vitro in a rapid manner. All tested concentrations of this peptide have little effect on the cell viability. In vivo, inhibits hind paw adjuvant-induced inflammation in mouse in a dose-dependent manner. Its function is as follows. Suppress host inflammatory response. Exerts significant anti-inflammatory functions, either by directly inhibiting host secretion of inflammatory factors such as tumor necrosis factor-alpha (TNF), monocyte chemotactic protein-1 (CCL2), and interferon-gamma (IFNG) or by indirectly increasing the secretion of immunosuppressant cytokine of interleukin-10 (IL10). Also potently scavenges free radical in vitro in a rapid manner. Low concentrations of this peptide have little effect on the cell viability, whereas high concentrations increase the cell viability by 10-20%. In vivo, inhibits hind paw adjuvant-induced inflammation in mouse in a dose-dependent manner. Not studied but probably similar to Hyalomin-B1. This Hyalomma asiaticum asiaticum (Tick) protein is Immunoregulatory peptides.